The primary structure comprises 171 residues: S-ribosylhomocysteine lyase (171 aa).

Fe cation is bound by residues His-54, His-58, and Cys-128.

It belongs to the LuxS family. In terms of assembly, homodimer. The cofactor is Fe cation.

It catalyses the reaction S-(5-deoxy-D-ribos-5-yl)-L-homocysteine = (S)-4,5-dihydroxypentane-2,3-dione + L-homocysteine. In terms of biological role, involved in the synthesis of autoinducer 2 (AI-2) which is secreted by bacteria and is used to communicate both the cell density and the metabolic potential of the environment. The regulation of gene expression in response to changes in cell density is called quorum sensing. Catalyzes the transformation of S-ribosylhomocysteine (RHC) to homocysteine (HC) and 4,5-dihydroxy-2,3-pentadione (DPD). This chain is S-ribosylhomocysteine lyase, found in Enterobacter sp. (strain 638).